We begin with the raw amino-acid sequence, 216 residues long: MILVGIAVLILLAVFAILYYKQKEKFVVVGKFVEPIPSNPGQDFTLLPMDQTYTFADPVPDTATAFDVVLSRFTDKKAPADLLKGATFPEAAPYTDSEVENISKLALSRVKGPDAPVLSFISVEYAAKGVDNKKNTHYDIAFMVYDQVKNFSLKLVLVAVLDAKNKLWIKKFSSFNSFTPKDKGPKGVENIDETPLAEFIPDFVQFSRLYKDNANV.

Positions methionine 1 to lysine 21 are hydrophobic.

Interacts with the major capsid protein.

It is found in the virion. Functionally, one of the minor capsid proteins that constitute a network internal to the major capsid proteins and outside the lipid membrane. The minor capsid proteins glue and stabilize the capsomers. This chain is Minor capsid protein P6, found in Paramecium bursaria Chlorella virus 1 (PBCV-1).